Reading from the N-terminus, the 356-residue chain is Probable arabinogalactan endo-beta-1,4-galactanase A (356 aa).

The N-terminal stretch at 1 to 21 (MLGKMILLPLFVLLCHSLASA) is a signal peptide. Asn133 carries an N-linked (GlcNAc...) asparagine glycan. Residue Glu157 is the Proton donor of the active site. The active-site Nucleophile is the Glu268.

It belongs to the glycosyl hydrolase 53 family.

Its subcellular location is the secreted. It carries out the reaction The enzyme specifically hydrolyzes (1-&gt;4)-beta-D-galactosidic linkages in type I arabinogalactans.. Its function is as follows. Endogalactanase involved in the degradation of plant cell wall polysaccharides, and more particularly of hairy regions of pectin. The sequence is that of Probable arabinogalactan endo-beta-1,4-galactanase A (galA) from Neosartorya fischeri (strain ATCC 1020 / DSM 3700 / CBS 544.65 / FGSC A1164 / JCM 1740 / NRRL 181 / WB 181) (Aspergillus fischerianus).